The sequence spans 93 residues: Small ribosomal subunit protein uS19 (93 aa).

The protein belongs to the universal ribosomal protein uS19 family.

Protein S19 forms a complex with S13 that binds strongly to the 16S ribosomal RNA. In Phytoplasma australiense, this protein is Small ribosomal subunit protein uS19.